Consider the following 243-residue polypeptide: uncharacterized protein (243 aa).

This is an uncharacterized protein from Methanocaldococcus jannaschii (strain ATCC 43067 / DSM 2661 / JAL-1 / JCM 10045 / NBRC 100440) (Methanococcus jannaschii).